Here is a 309-residue protein sequence, read N- to C-terminus: UDP-3-O-acyl-N-acetylglucosamine deacetylase (309 aa).

Residues His78, His235, and Asp239 each coordinate Zn(2+). His262 acts as the Proton donor in catalysis.

It belongs to the LpxC family. Requires Zn(2+) as cofactor.

The enzyme catalyses a UDP-3-O-[(3R)-3-hydroxyacyl]-N-acetyl-alpha-D-glucosamine + H2O = a UDP-3-O-[(3R)-3-hydroxyacyl]-alpha-D-glucosamine + acetate. It functions in the pathway glycolipid biosynthesis; lipid IV(A) biosynthesis; lipid IV(A) from (3R)-3-hydroxytetradecanoyl-[acyl-carrier-protein] and UDP-N-acetyl-alpha-D-glucosamine: step 2/6. In terms of biological role, catalyzes the hydrolysis of UDP-3-O-myristoyl-N-acetylglucosamine to form UDP-3-O-myristoylglucosamine and acetate, the committed step in lipid A biosynthesis. The chain is UDP-3-O-acyl-N-acetylglucosamine deacetylase from Syntrophotalea carbinolica (strain DSM 2380 / NBRC 103641 / GraBd1) (Pelobacter carbinolicus).